Here is a 454-residue protein sequence, read N- to C-terminus: Inner membrane transport protein YajR (454 aa).

At 1–14 the chain is on the periplasmic side; it reads MNDYKMTPGERRAT. The chain crosses the membrane as a helical span at residues 15 to 35; the sequence is WGLGTVFSLRMLGMFMVLPVL. Over 36-47 the chain is Cytoplasmic; the sequence is TTYGMALQGASE. Residues 48–68 form a helical membrane-spanning segment; it reads ALIGIAIGIYGLTQAVFQIPF. Topologically, residues 69–84 are periplasmic; that stretch reads GLLSDRIGRKPLIVGG. The chain crosses the membrane as a helical span at residues 85 to 105; it reads LAVFAAGSVIAALSDSIWGII. Topologically, residues 106–137 are cytoplasmic; the sequence is LGRALQGSGAIAAAVMALLSDLTREQNRTKAM. The chain crosses the membrane as a helical span at residues 138–158; the sequence is AFIGVSFGITFAIAMVLGPII. The Periplasmic portion of the chain corresponds to 159–165; the sequence is THKLGLH. The chain crosses the membrane as a helical span at residues 166 to 186; the sequence is ALFWMIAILATTGIALTIWVV. Residues 187 to 216 are Cytoplasmic-facing; that stretch reads PNSSTHVLNRESGMVKGSFSKVLAEPRLLK. A helical membrane pass occupies residues 217 to 237; it reads LNFGIMCLHILLMSTFVALPG. Residues 238–252 are Periplasmic-facing; it reads QLADAGFPAAEHWKV. A helical transmembrane segment spans residues 253-273; it reads YLATMLIAFGSVVPFIIYAEV. At 274-279 the chain is on the cytoplasmic side; sequence KRKMKQ. The chain crosses the membrane as a helical span at residues 280 to 300; the sequence is VFVFCVGLIVVAEIVLWNAQT. The Periplasmic portion of the chain corresponds to 301 to 306; the sequence is QFWQLV. A helical membrane pass occupies residues 307 to 327; it reads VGVQLFFVAFNLMEALLPSLI. At 328–340 the chain is on the cytoplasmic side; sequence SKESPAGYKGTAM. A helical membrane pass occupies residues 341–361; the sequence is GVYSTSQFLGVAIGGSLGGWI. Topologically, residues 362-363 are periplasmic; that stretch reads NG. A helical membrane pass occupies residues 364–384; sequence MFDGQGVFLAGAMLAAVWLTV. The Cytoplasmic portion of the chain corresponds to 385–454; it reads ASTMKEPPYV…FEIEQAIRQA (70 aa).

The protein belongs to the major facilitator superfamily.

The protein localises to the cell inner membrane. The chain is Inner membrane transport protein YajR (yajR) from Escherichia coli (strain K12).